Reading from the N-terminus, the 500-residue chain is MVNASGDPVIEAAHIWSDTLTVLKHSASLSPREKGWLEGVVPEGVFGSTIVLCVDNNDTLQAIQGDLNDSLLQALRTVTGENMFPAFKVVPKTEPEPLSEAKPAQPYPSEISPTVAEFGKESYGAKPAAAPREPMPATEPQFPVGQQKMNRDPETHLNKNFTFDSFVPGDSNRFARTVALAVAEGSGQDFNPLCIYGGSGLGKTHLLNAIGNYALVKDPGLKVRYVTSEEFTNEFIDALQNPNQSQGQIAEFNRRYRQVDVLLIDDIQFLGGKEATLDQFFHTFNALHQANKRIVIASDVAPKNLKGFEARLISRFESGLTVDVKPPDLETRIAILRMIASMNGSKIPSDVLDLIAERFTENIRELEGALTRVTAVASLSNQPVTRALAEQTLQDFFTTDVEIKPTDIISQVAKYFHLTFEDLVGKSRTKNVAVPRQIAMYLAREMTSMSLMDIGQVFGGRDHTTVMHACTRISDRMQQKQEIYNYVMELTVRLKQSNTN.

Residues 1–81 are domain I, interacts with DnaA modulators; it reads MVNASGDPVI…LQALRTVTGE (81 aa). A domain II region spans residues 81–155; sequence ENMFPAFKVV…QQKMNRDPET (75 aa). The tract at residues 156–377 is domain III, AAA+ region; sequence HLNKNFTFDS…GALTRVTAVA (222 aa). 4 residues coordinate ATP: Gly-200, Gly-202, Lys-203, and Thr-204. The interval 378-500 is domain IV, binds dsDNA; that stretch reads SLSNQPVTRA…TVRLKQSNTN (123 aa).

The protein belongs to the DnaA family. In terms of assembly, oligomerizes as a right-handed, spiral filament on DNA at oriC.

It is found in the cytoplasm. Functionally, plays an essential role in the initiation and regulation of chromosomal replication. ATP-DnaA binds to the origin of replication (oriC) to initiate formation of the DNA replication initiation complex once per cell cycle. Binds the DnaA box (a 9 base pair repeat at the origin) and separates the double-stranded (ds)DNA. Forms a right-handed helical filament on oriC DNA; dsDNA binds to the exterior of the filament while single-stranded (ss)DNA is stabiized in the filament's interior. The ATP-DnaA-oriC complex binds and stabilizes one strand of the AT-rich DNA unwinding element (DUE), permitting loading of DNA polymerase. After initiation quickly degrades to an ADP-DnaA complex that is not apt for DNA replication. Binds acidic phospholipids. The polypeptide is Chromosomal replication initiator protein DnaA (Bifidobacterium longum (strain DJO10A)).